Consider the following 428-residue polypeptide: Gamma-glutamyl phosphate reductase (428 aa).

This sequence belongs to the gamma-glutamyl phosphate reductase family.

The protein localises to the cytoplasm. It carries out the reaction L-glutamate 5-semialdehyde + phosphate + NADP(+) = L-glutamyl 5-phosphate + NADPH + H(+). Its pathway is amino-acid biosynthesis; L-proline biosynthesis; L-glutamate 5-semialdehyde from L-glutamate: step 2/2. Functionally, catalyzes the NADPH-dependent reduction of L-glutamate 5-phosphate into L-glutamate 5-semialdehyde and phosphate. The product spontaneously undergoes cyclization to form 1-pyrroline-5-carboxylate. The chain is Gamma-glutamyl phosphate reductase from Streptomyces avermitilis (strain ATCC 31267 / DSM 46492 / JCM 5070 / NBRC 14893 / NCIMB 12804 / NRRL 8165 / MA-4680).